We begin with the raw amino-acid sequence, 89 residues long: MADEENTTEILLSVSLRKARFSSKSRRADTSIKMLKDAVARYTKSDRDRIWVDNKVNELIWSRGRRKVPTRVNIKVIKLEDGTSEIILP.

The protein belongs to the eukaryotic ribosomal protein eL31 family.

The protein is Large ribosomal subunit protein eL31 of Picrophilus torridus (strain ATCC 700027 / DSM 9790 / JCM 10055 / NBRC 100828 / KAW 2/3).